A 75-amino-acid chain; its full sequence is Translational regulator CsrA (75 aa).

Belongs to the CsrA/RsmA family. Homodimer; the beta-strands of each monomer intercalate to form a hydrophobic core, while the alpha-helices form wings that extend away from the core.

Its subcellular location is the cytoplasm. Functionally, a translational regulator that binds mRNA to regulate translation initiation and/or mRNA stability. Usually binds in the 5'-UTR at or near the Shine-Dalgarno sequence preventing ribosome-binding, thus repressing translation. Its main target seems to be the major flagellin gene, while its function is anatagonized by FliW. This is Translational regulator CsrA from Acetivibrio thermocellus (strain ATCC 27405 / DSM 1237 / JCM 9322 / NBRC 103400 / NCIMB 10682 / NRRL B-4536 / VPI 7372) (Clostridium thermocellum).